The primary structure comprises 160 residues: Aspartate 1-decarboxylase 2 (160 aa).

Ser25 serves as the catalytic Schiff-base intermediate with substrate; via pyruvic acid. Position 25 is a pyruvic acid (Ser) (Ser25). Thr57 provides a ligand contact to substrate. The active-site Proton donor is the Tyr58. 73 to 75 is a substrate binding site; that stretch reads GAA.

This sequence belongs to the PanD family. In terms of assembly, heterooctamer of four alpha and four beta subunits. It depends on pyruvate as a cofactor. In terms of processing, is synthesized initially as an inactive proenzyme, which is activated by self-cleavage at a specific serine bond to produce a beta-subunit with a hydroxyl group at its C-terminus and an alpha-subunit with a pyruvoyl group at its N-terminus.

It localises to the cytoplasm. It catalyses the reaction L-aspartate + H(+) = beta-alanine + CO2. It functions in the pathway cofactor biosynthesis; (R)-pantothenate biosynthesis; beta-alanine from L-aspartate: step 1/1. Its function is as follows. Catalyzes the pyruvoyl-dependent decarboxylation of aspartate to produce beta-alanine. This Frankia casuarinae (strain DSM 45818 / CECT 9043 / HFP020203 / CcI3) protein is Aspartate 1-decarboxylase 2.